Reading from the N-terminus, the 391-residue chain is 3-ketoacyl-CoA thiolase (391 aa).

Cys-95 (acyl-thioester intermediate) is an active-site residue. Catalysis depends on proton acceptor residues His-347 and Cys-377.

The protein belongs to the thiolase-like superfamily. Thiolase family. As to quaternary structure, heterotetramer of two alpha chains (FadB) and two beta chains (FadA).

It is found in the cytoplasm. The enzyme catalyses an acyl-CoA + acetyl-CoA = a 3-oxoacyl-CoA + CoA. It functions in the pathway lipid metabolism; fatty acid beta-oxidation. Functionally, catalyzes the final step of fatty acid oxidation in which acetyl-CoA is released and the CoA ester of a fatty acid two carbons shorter is formed. This is 3-ketoacyl-CoA thiolase from Pseudomonas syringae pv. syringae (strain B728a).